The sequence spans 234 residues: LexA repressor (234 aa).

The H-T-H motif DNA-binding region spans 26 to 46 (FDEMKEALDLASKSGIHRLIT). The interval 73–107 (ATAAAPPKGRGAFRPQVFEGGGAPPPAASPAAAAN) is disordered. Active-site for autocatalytic cleavage activity residues include serine 155 and lysine 192.

This sequence belongs to the peptidase S24 family. Homodimer.

It carries out the reaction Hydrolysis of Ala-|-Gly bond in repressor LexA.. Represses a number of genes involved in the response to DNA damage (SOS response), including recA and lexA. In the presence of single-stranded DNA, RecA interacts with LexA causing an autocatalytic cleavage which disrupts the DNA-binding part of LexA, leading to derepression of the SOS regulon and eventually DNA repair. This Caulobacter vibrioides (strain ATCC 19089 / CIP 103742 / CB 15) (Caulobacter crescentus) protein is LexA repressor.